The chain runs to 418 residues: D-inositol 3-phosphate glycosyltransferase 1 (418 aa).

UDP-N-acetyl-alpha-D-glucosamine-binding positions include 24–25 (QP) and Gly32. Residues 29 to 34 (DAGGLN), Lys87, His115, Ser139, and Gln159 each bind 1D-myo-inositol 3-phosphate. Residues Arg233 and Lys238 each coordinate UDP-N-acetyl-alpha-D-glucosamine. Mg(2+) is bound by residues Tyr308, Arg309, and Ala311. Glu321 and Glu329 together coordinate UDP-N-acetyl-alpha-D-glucosamine. Position 335 (Thr335) interacts with Mg(2+).

It belongs to the glycosyltransferase group 1 family. MshA subfamily. As to quaternary structure, homodimer.

It carries out the reaction 1D-myo-inositol 3-phosphate + UDP-N-acetyl-alpha-D-glucosamine = 1D-myo-inositol 2-acetamido-2-deoxy-alpha-D-glucopyranoside 3-phosphate + UDP + H(+). In terms of biological role, catalyzes the transfer of a N-acetyl-glucosamine moiety to 1D-myo-inositol 3-phosphate to produce 1D-myo-inositol 2-acetamido-2-deoxy-glucopyranoside 3-phosphate in the mycothiol biosynthesis pathway. The sequence is that of D-inositol 3-phosphate glycosyltransferase 1 from Catenulispora acidiphila (strain DSM 44928 / JCM 14897 / NBRC 102108 / NRRL B-24433 / ID139908).